Consider the following 562-residue polypeptide: Dihydroxy-acid dehydratase (562 aa).

Residue Asp-80 coordinates Mg(2+). [2Fe-2S] cluster is bound at residue Cys-121. Mg(2+) is bound by residues Asp-122 and Lys-123. At Lys-123 the chain carries N6-carboxylysine. Residue Cys-194 coordinates [2Fe-2S] cluster. Glu-446 contacts Mg(2+). Ser-472 acts as the Proton acceptor in catalysis.

It belongs to the IlvD/Edd family. Homodimer. Requires [2Fe-2S] cluster as cofactor. The cofactor is Mg(2+).

It carries out the reaction (2R)-2,3-dihydroxy-3-methylbutanoate = 3-methyl-2-oxobutanoate + H2O. The catalysed reaction is (2R,3R)-2,3-dihydroxy-3-methylpentanoate = (S)-3-methyl-2-oxopentanoate + H2O. It participates in amino-acid biosynthesis; L-isoleucine biosynthesis; L-isoleucine from 2-oxobutanoate: step 3/4. It functions in the pathway amino-acid biosynthesis; L-valine biosynthesis; L-valine from pyruvate: step 3/4. Functionally, functions in the biosynthesis of branched-chain amino acids. Catalyzes the dehydration of (2R,3R)-2,3-dihydroxy-3-methylpentanoate (2,3-dihydroxy-3-methylvalerate) into 2-oxo-3-methylpentanoate (2-oxo-3-methylvalerate) and of (2R)-2,3-dihydroxy-3-methylbutanoate (2,3-dihydroxyisovalerate) into 2-oxo-3-methylbutanoate (2-oxoisovalerate), the penultimate precursor to L-isoleucine and L-valine, respectively. This chain is Dihydroxy-acid dehydratase, found in Staphylococcus aureus (strain USA300 / TCH1516).